A 652-amino-acid chain; its full sequence is Fimbrin-4 (652 aa).

Calponin-homology (CH) domains follow at residues 116–233, 261–364, 388–494, and 509–617; these read ESEK…KIQL, LAPE…HHRN, SREE…RYTM, and DITE…NWSL. Actin-binding regions lie at residues 116 to 364 and 388 to 617; these read ESEK…HHRN and SREE…NWSL. The tract at residues 623–652 is disordered; that stretch reads TESTVSDDTDVSSVTEEISNLSTDDGSSDV. A compositionally biased stretch (polar residues) spans 640–652; that stretch reads ISNLSTDDGSSDV.

As to quaternary structure, interacts with F-actin.

Its subcellular location is the cytoplasm. The protein localises to the cytoskeleton. Cross-links actin filaments (F-actin). Stabilizes and prevents F-actin depolymerization mediated by profilin. May regulate actin cytoarchitecture, cell cycle, cell division, cell elongation and cytoplasmic tractus. The sequence is that of Fimbrin-4 from Arabidopsis thaliana (Mouse-ear cress).